Consider the following 832-residue polypeptide: SID1 transmembrane family member 2 (832 aa).

Positions 1 to 15 (MIAWRLPLCVLLVAA) are cleaved as a signal peptide. The Extracellular segment spans residues 16 to 293 (VESHLGALGP…VSQAVTSEAY (278 aa)). N27, N54, N60, N123, N141, and N165 each carry an N-linked (GlcNAc...) asparagine glycan. A helical transmembrane segment spans residues 294–314 (VGGMLFCLGIFLSFYLLTVLL). The Cytoplasmic segment spans residues 315–447 (ACWENWRQRK…DKRVLRKKYQ (133 aa)). Phosphoserine occurs at positions 401, 403, and 404. A helical transmembrane segment spans residues 448–468 (IYFWNIATIAVFYALPVVQLV). Topologically, residues 469–499 (ITYQTVVNVTGNQDICYYNFLCAHPLGNLSA) are extracellular. N-linked (GlcNAc...) asparagine glycans are attached at residues N476 and N496. Residues 500 to 520 (FNNILSNLGYILLGLLFLLII) form a helical membrane-spanning segment. The Cytoplasmic segment spans residues 521 to 546 (LQREINHNRALLRNDLYALECGIPKH). A helical membrane pass occupies residues 547-567 (FGLFYAMGTALMMEGLLSACY). The Extracellular segment spans residues 568–605 (HVCPNYTNFQFDTSFMYMIAGLCMLKLYQKRHPDINAS). N-linked (GlcNAc...) asparagine glycans are attached at residues N572 and N603. The chain crosses the membrane as a helical span at residues 606-626 (AYSAYACLAIVIFFSVLGVVF). Residues 627–631 (GKGNT) are Cytoplasmic-facing. Residues 632–652 (AFWIVFSVIHIISTLLLSTQL) form a helical membrane-spanning segment. The Extracellular portion of the chain corresponds to 653 to 688 (YYMGRWKLDSGIFRRILHVLYTDCIRQCSGPLYTDR). The helical transmembrane segment at 689–709 (MVLLVMGNIINWSLAAYGLIM) threads the bilayer. Topologically, residues 710-715 (RPNDFA) are cytoplasmic. Residues 716–736 (SYLLAIGICNLLLYFAFYIIM) traverse the membrane as a helical segment. At 737–746 (KLRSGERIKL) the chain is on the extracellular side. Residues 747–767 (IPLLCIVCTSVVWGFALFFFF) form a helical membrane-spanning segment. Over 768–796 (QGLSTWQKTPAESREHNRDCILLDFFDDH) the chain is Cytoplasmic. Residues 797–817 (DIWHFLSSIAMFGSFLVLLTL) traverse the membrane as a helical segment. At 818 to 832 (DDDLDTVQRDKIYVF) the chain is on the extracellular side.

It belongs to the SID1 family. Interacts with adapter protein complex 1 (AP-1) and AP-2, but not AP-3 and AP-4. Interacts with LAMP2. Post-translationally, glycosylated. As to expression, highly expressed in the liver, brain, kidney and intestine (at protein level).

The protein localises to the lysosome membrane. Its subcellular location is the cell membrane. In terms of biological role, mediates the translocation of RNA and DNA across the lysosomal membrane during RNA and DNA autophagy (RDA), a process in which RNA or DNA is directly imported into lysosomes in an ATP-dependent manner, and degraded. Involved in the uptake of single-stranded oligonucleotides by living cells, a process called gymnosis. In vitro, mediates the uptake of linear DNA more efficiently than that of circular DNA, but exhibits similar uptake efficacy toward RNA and DNA. Binds long double-stranded RNA (dsRNA) (500 - 700 base pairs), but not dsRNA shorter than 100 bp. The sequence is that of SID1 transmembrane family member 2 (Sidt2) from Rattus norvegicus (Rat).